Reading from the N-terminus, the 1286-residue chain is DNA-directed RNA polymerase 147 kDa polypeptide (1286 aa).

Belongs to the poxviridae DNA-directed RNA polymerase 147 kDa subunit family. As to quaternary structure, the DNA-dependent RNA polymerase used for intermediate and late genes expression consists of eight subunits Rpo30/OPG66, Rpo7/OPG90, Rpo22/OPG103, Rpo147/OPG105, Rpo18/OPG119, Rpo19/OPG131, Rpo132/OPG151 and Rpo35/OPG156. The same holoenzyme, with the addition of the transcription-specificity factor OPG109, is used for early gene expression.

The protein resides in the virion. It catalyses the reaction RNA(n) + a ribonucleoside 5'-triphosphate = RNA(n+1) + diphosphate. In terms of biological role, part of the DNA-dependent RNA polymerase which catalyzes the transcription of viral DNA into RNA using the four ribonucleoside triphosphates as substrates. Responsible for the transcription of early, intermediate and late genes. DNA-dependent RNA polymerase associates with the early transcription factor (ETF), itself composed of OPG118 and OPG133, thereby allowing the early genes transcription. Late transcription, and probably also intermediate transcription, require newly synthesized RNA polymerase. The protein is DNA-directed RNA polymerase 147 kDa polypeptide (OPG105) of Vaccinia virus (strain Ankara) (VACV).